The chain runs to 704 residues: Meprin A subunit beta (704 aa).

An N-terminal signal peptide occupies residues 1–20 (MDARHQPWFLVFATFLLVSG). Positions 21–64 (LPAPEKFVKDIDGGIDQDIFDINQGLGLDLFEGDIKLEANGKNS) are excised as a propeptide. Topologically, residues 21-654 (LPAPEKFVKD…RCEKRGSTRD (634 aa)) are extracellular. Positions 63 to 257 (NSIIGDHKRW…LKLNQLYNCT (195 aa)) constitute a Peptidase M12A domain. 3 disulfides stabilise this stretch: Cys104–Cys256, Cys125–Cys145, and Cys266–Cys428. His153 provides a ligand contact to Zn(2+). Glu154 is a catalytic residue. Zn(2+) is bound by residues His157 and His163. Residues Asn193, Asn219, Asn255, Asn316, Asn422, Asn437, Asn529, Asn548, and Asn593 are each glycosylated (N-linked (GlcNAc...) asparagine). The 170-residue stretch at 261-430 (SFMDSCDFEL…INLSETRCPH (170 aa)) folds into the MAM domain. One can recognise an MATH domain in the interval 431 to 586 (HIWHIQNFTQ…GDDIYILLTV (156 aa)). One can recognise an EGF-like domain in the interval 607–647 (VHNACSEVVCQNGGICVVQDGRAECKCPAGEDWWYMGKRCE). 3 disulfides stabilise this stretch: Cys611–Cys622, Cys616–Cys631, and Cys633–Cys646. Residues 655-678 (TVIIAVSSTVTVFAVMLIITLVSV) form a helical membrane-spanning segment. Residues 679–704 (YCTRRKYRKKARANTAAMTLENQHAF) lie on the Cytoplasmic side of the membrane. Thr697 carries the phosphothreonine modification.

As to quaternary structure, homotetramer consisting of disulfide-linked beta subunits, or heterotetramer of two alpha and two beta subunits formed by non-covalent association of two disulfide-linked heterodimers. Interacts with MBL2 through its carbohydrate moiety. This interaction may inhibit its catalytic activity. Interacts with TSPAN8. Zn(2+) serves as cofactor. Proteolytically activated by trypsin in the intestinal lumen and kallikrein-related peptidases in other tissues. Post-translationally, N-glycosylated; contains high mannose and/or complex biantennary structures. In terms of processing, phosphorylated by PKC at multiple sites of its cytoplasmic part. Phosphorylation dcreases activity at the cell surface, leading to diminished substrate cleavage. Isoform 1 is expressed in kidney, intestinal brush borders, and salivary ducts. Isoform 2 has been found in carcinoma cells.

It is found in the cell membrane. The protein resides in the secreted. It carries out the reaction Hydrolysis of proteins, including azocasein, and peptides. Hydrolysis of 5-His-|-Leu-6, 6-Leu-|-Cys-7, 14-Ala-|-Leu-15 and 19-Cys-|-Gly-20 bonds in insulin B chain.. Strongly inhibited by fetuin-A/AHSG. Inhibited by cysteine and by the metal ion chelators EDTA and 1,10-phenanthroline. Not inhibited by 3,4-dichloroisocourmarin, soybean trypsin inhibitor, or the cysteine proteinase inhibitors iodoacetic acid and E-64. In terms of biological role, membrane metallopeptidase that sheds many membrane-bound proteins. Exhibits a strong preference for acidic amino acids at the P1' position. Known substrates include: FGF19, VGFA, IL1B, IL18, procollagen I and III, E-cadherin, KLK7, gastrin, ADAM10, tenascin-C. The presence of several pro-inflammatory cytokine among substrates implicate MEP1B in inflammation. It is also involved in tissue remodeling due to its capability to degrade extracellular matrix components. The protein is Meprin A subunit beta (Mep1b) of Mus musculus (Mouse).